Consider the following 584-residue polypeptide: Interferon regulatory factor 2-binding protein 1 (584 aa).

Residues 60–127 (VLPEGRSPGP…SGRLPLPSPA (68 aa)) form a disordered region. A phosphoserine mark is found at serine 66 and serine 125. Position 177 is an omega-N-methylarginine (arginine 177). Serine 186 carries the post-translational modification Phosphoserine. The stretch at 197–217 (EKEKQQRNADCLAELNEAMRG) forms a coiled coil. Lysine 227 participates in a covalent cross-link: Glycyl lysine isopeptide (Lys-Gly) (interchain with G-Cter in SUMO2). Residues 346–420 (PAEALPQQYP…PYSAETPGVP (75 aa)) are disordered. Over residues 354-369 (YPEPAPAALCGPPPRA) the composition is skewed to pro residues. A phosphoserine mark is found at serine 371, serine 384, serine 421, and serine 436. Residues 433–495 (LGHSPKDPGG…VSGGGSGTGA (63 aa)) are disordered. Residue lysine 438 forms a Glycyl lysine isopeptide (Lys-Gly) (interchain with G-Cter in SUMO2) linkage. Residues 449-463 (AGGASPAASSTAQPP) show a composition bias toward low complexity. Phosphoserine is present on residues serine 453 and serine 457. Residues 503-550 (CTLCRERLEDTHFVQCPSVPGHKFCFPCSREFIKAQGPAGEVYCPSGD) form an RING-type; degenerate zinc finger. Residues 503–550 (CTLCRERLEDTHFVQCPSVPGHKFCFPCSREFIKAQGPAGEVYCPSGD) form a cys-rich region.

Belongs to the IRF2BP family. Interacts with IRF2. Part of a corepressor complex containing IRF2 and IRF2BP2. Interacts with JDP2.

The protein localises to the nucleus. The enzyme catalyses S-ubiquitinyl-[E2 ubiquitin-conjugating enzyme]-L-cysteine + [acceptor protein]-L-lysine = [E2 ubiquitin-conjugating enzyme]-L-cysteine + N(6)-ubiquitinyl-[acceptor protein]-L-lysine.. Acts as a transcriptional corepressor in a IRF2-dependent manner; this repression is not mediated by histone deacetylase activities. May act as an E3 ligase towards JDP2, enhancing its polyubiquitination. Represses ATF2-dependent transcriptional activation. The sequence is that of Interferon regulatory factor 2-binding protein 1 (IRF2BP1) from Homo sapiens (Human).